The following is a 160-amino-acid chain: E3 ubiquitin ligase complex SCF subunit sconC (160 aa).

Residues 101 to 160 are interaction with the F-box domain of F-box proteins; that stretch reads ILAANYLDIKALLDVGCKTVANMIKGKSPEEIRKTFNIQNDFTPEEEDQIRRENEWAEDR.

The protein belongs to the SKP1 family. As to quaternary structure, component of the SCF (SKP1-CUL1-F-box protein) E3 ubiquitin ligase complexes.

It functions in the pathway protein modification; protein ubiquitination. In terms of biological role, essential component of the SCF (SKP1-CUL1-F-box protein) E3 ubiquitin ligase complexes, which mediate the ubiquitination and subsequent proteasomal degradation of target proteins. Controls sulfur metabolite repression, probably by mediating the inactivation or degradation of the metR transcription factor. The chain is E3 ubiquitin ligase complex SCF subunit sconC (sconC) from Talaromyces stipitatus (strain ATCC 10500 / CBS 375.48 / QM 6759 / NRRL 1006) (Penicillium stipitatum).